A 261-amino-acid polypeptide reads, in one-letter code: NAD(P)H-quinone oxidoreductase subunit K, chloroplastic (261 aa).

The [4Fe-4S] cluster site is built by Cys-43, Cys-44, Cys-108, and Cys-139.

Belongs to the complex I 20 kDa subunit family. In terms of assembly, NDH is composed of at least 16 different subunits, 5 of which are encoded in the nucleus. Requires [4Fe-4S] cluster as cofactor.

It is found in the plastid. The protein resides in the chloroplast thylakoid membrane. It catalyses the reaction a plastoquinone + NADH + (n+1) H(+)(in) = a plastoquinol + NAD(+) + n H(+)(out). It carries out the reaction a plastoquinone + NADPH + (n+1) H(+)(in) = a plastoquinol + NADP(+) + n H(+)(out). Its function is as follows. NDH shuttles electrons from NAD(P)H:plastoquinone, via FMN and iron-sulfur (Fe-S) centers, to quinones in the photosynthetic chain and possibly in a chloroplast respiratory chain. The immediate electron acceptor for the enzyme in this species is believed to be plastoquinone. Couples the redox reaction to proton translocation, and thus conserves the redox energy in a proton gradient. This chain is NAD(P)H-quinone oxidoreductase subunit K, chloroplastic, found in Cycas taitungensis (Prince sago).